The sequence spans 180 residues: Sec-independent protein translocase protein TatB (180 aa).

Residues 1-21 (MFDIGWSELLVIGVVALIAIG) form a helical membrane-spanning segment. The interval 77 to 180 (TRGDLMTRLT…DQTARGAKAS (104 aa)) is disordered. Over residues 105–129 (ADKPSVSSDAASASGSAAPEAGAAE) the composition is skewed to low complexity.

Belongs to the TatB family. The Tat system comprises two distinct complexes: a TatABC complex, containing multiple copies of TatA, TatB and TatC subunits, and a separate TatA complex, containing only TatA subunits. Substrates initially bind to the TatABC complex, which probably triggers association of the separate TatA complex to form the active translocon.

It is found in the cell inner membrane. Part of the twin-arginine translocation (Tat) system that transports large folded proteins containing a characteristic twin-arginine motif in their signal peptide across membranes. Together with TatC, TatB is part of a receptor directly interacting with Tat signal peptides. TatB may form an oligomeric binding site that transiently accommodates folded Tat precursor proteins before their translocation. The chain is Sec-independent protein translocase protein TatB from Nitrobacter winogradskyi (strain ATCC 25391 / DSM 10237 / CIP 104748 / NCIMB 11846 / Nb-255).